Reading from the N-terminus, the 262-residue chain is Indole-3-glycerol phosphate synthase (262 aa).

Belongs to the TrpC family.

The enzyme catalyses 1-(2-carboxyphenylamino)-1-deoxy-D-ribulose 5-phosphate + H(+) = (1S,2R)-1-C-(indol-3-yl)glycerol 3-phosphate + CO2 + H2O. It functions in the pathway amino-acid biosynthesis; L-tryptophan biosynthesis; L-tryptophan from chorismate: step 4/5. In Aromatoleum aromaticum (strain DSM 19018 / LMG 30748 / EbN1) (Azoarcus sp. (strain EbN1)), this protein is Indole-3-glycerol phosphate synthase.